We begin with the raw amino-acid sequence, 338 residues long: tRNA N6-adenosine threonylcarbamoyltransferase (338 aa).

Fe cation is bound by residues His-111 and His-115. Substrate-binding positions include Leu-134–Gly-138, Asp-167, Gly-180, and Asn-272. Asp-300 lines the Fe cation pocket.

This sequence belongs to the KAE1 / TsaD family. Requires Fe(2+) as cofactor.

The protein resides in the cytoplasm. It carries out the reaction L-threonylcarbamoyladenylate + adenosine(37) in tRNA = N(6)-L-threonylcarbamoyladenosine(37) in tRNA + AMP + H(+). Its function is as follows. Required for the formation of a threonylcarbamoyl group on adenosine at position 37 (t(6)A37) in tRNAs that read codons beginning with adenine. Is involved in the transfer of the threonylcarbamoyl moiety of threonylcarbamoyl-AMP (TC-AMP) to the N6 group of A37, together with TsaE and TsaB. TsaD likely plays a direct catalytic role in this reaction. This Nitrosomonas eutropha (strain DSM 101675 / C91 / Nm57) protein is tRNA N6-adenosine threonylcarbamoyltransferase.